Reading from the N-terminus, the 98-residue chain is Plastocyanin (98 aa).

Residues 1-98 enclose the Plastocyanin-like domain; the sequence is DVTVKLGADS…AGMKGTITVQ (98 aa). Residues H38, C83, H86, and M91 each contribute to the Cu cation site.

This sequence belongs to the plastocyanin family. Cu(2+) serves as cofactor.

The protein resides in the plastid. It localises to the chloroplast thylakoid membrane. Its function is as follows. Participates in electron transfer between P700 and the cytochrome b6-f complex in photosystem I. The polypeptide is Plastocyanin (petE) (Scenedesmus fuscus (Green alga)).